The sequence spans 210 residues: Scoloptoxin SSD976 (210 aa).

The signal sequence occupies residues 1 to 23; sequence MNILLSSTLFVLLMFQIIGSGMG.

Post-translationally, contains 3 disulfide bonds. As to expression, expressed by the venom gland.

Its subcellular location is the secreted. Functionally, voltage-gated calcium channel inhibitor. The sequence is that of Scoloptoxin SSD976 from Scolopendra dehaani (Thai centipede).